Consider the following 398-residue polypeptide: S-adenosylmethionine synthase (398 aa).

An ATP-binding site is contributed by 136-141 (GTGSSD).

Belongs to the AdoMet synthase 2 family. Mg(2+) is required as a cofactor.

The catalysed reaction is L-methionine + ATP + H2O = S-adenosyl-L-methionine + phosphate + diphosphate. It functions in the pathway amino-acid biosynthesis; S-adenosyl-L-methionine biosynthesis; S-adenosyl-L-methionine from L-methionine: step 1/1. Catalyzes the formation of S-adenosylmethionine from methionine and ATP. This chain is S-adenosylmethionine synthase, found in Methanosarcina acetivorans (strain ATCC 35395 / DSM 2834 / JCM 12185 / C2A).